A 1550-amino-acid polypeptide reads, in one-letter code: Adhesion G protein-coupled receptor L3 (1550 aa).

Positions 1-19 (MCPPQLFILMMLLAPVVHG) are cleaved as a signal peptide. At 20–948 (GKHNERHPAL…VHDLLLDVIT (929 aa)) the chain is on the extracellular side. Positions 34 to 80 (RHAEHSPGGPLPPRHLLQQPAAERSTAHRGQGPRGTARGVRGPGAPG) are disordered. The 90-residue stretch at 103–192 (SCESYPIELR…KYLEVQYECV (90 aa)) folds into the SUEL-type lectin domain. 5 disulfide bridges follow: cysteine 104/cysteine 134, cysteine 113/cysteine 191, cysteine 146/cysteine 178, cysteine 159/cysteine 165, and cysteine 203/cysteine 385. Asparagine 161 is a glycosylation site (N-linked (GlcNAc...) asparagine). One can recognise an Olfactomedin-like domain in the interval 202 to 461 (LCPGLLKGVY…VVKYSLDFGP (260 aa)). The segment at 317–347 (YHDTSPYRWGGKSDIDLAVDENGLWVIYATE) is interaction with FLRT3. Aspartate 332, asparagine 380, alanine 381, and valine 435 together coordinate Ca(2+). The disordered stretch occupies residues 518–538 (NLGRSTTPSLPGRRNRSTSTP). N-linked (GlcNAc...) asparagine glycans are attached at residues asparagine 532, asparagine 616, asparagine 839, asparagine 884, and asparagine 910. The region spanning 755–934 (DIVRENTDNI…AVLMAHVEVK (180 aa)) is the GAIN-B domain. 2 disulfide bridges follow: cysteine 885/cysteine 916 and cysteine 904/cysteine 918. Residues 885-934 (CSFWSYSKRTMTGYWSTQGCRLLTTNKTHTTCSCNHLTNFAVLMAHVEVK) form a GPS region. The segment at 922-938 (TNFAVLMAHVEVKHSDA) is stachel. A helical transmembrane segment spans residues 949–969 (WVGILLSLVCLLICIFTFCFF). The Cytoplasmic portion of the chain corresponds to 970 to 977 (RGLQSDRN). Residues 978-998 (TIHKNLCISLFVAELLFLIGI) traverse the membrane as a helical segment. Asparagine 999 is a glycosylation site (N-linked (GlcNAc...) asparagine). The Extracellular segment spans residues 999-1006 (NRTDQPIA). The helical transmembrane segment at 1007–1027 (CAVFAALLHFFFLAAFTWMFL) threads the bilayer. Over 1028 to 1048 (EGVQLYIMLVEVFESEHSRRK) the chain is Cytoplasmic. The chain crosses the membrane as a helical span at residues 1049–1069 (YFYLVGYGMPALIVAVSAAVD). At 1070 to 1087 (YRSYGTDKVCWLRLDTYF) the chain is on the extracellular side. The chain crosses the membrane as a helical span at residues 1088–1108 (IWSFIGPATLIIMLNVIFLGI). The Cytoplasmic segment spans residues 1109-1141 (ALYKMFHHTAILKPESGCLDNINYEDNRPFIKS). The helical transmembrane segment at 1142–1162 (WVIGAIALLCLLGLTWAFGLM) threads the bilayer. The Extracellular segment spans residues 1163–1168 (YINEST). Residue asparagine 1165 is glycosylated (N-linked (GlcNAc...) asparagine). Residues 1169-1189 (VIMAYLFTIFNSLQGMFIFIF) traverse the membrane as a helical segment. The Cytoplasmic segment spans residues 1190–1550 (HCVLQKKVRK…KGPAHLVTSL (361 aa)). Residues 1213-1236 (KSTESSIGSGKTSGSRTPGRYSTG) are disordered. Residue serine 1253 is modified to Phosphoserine. Disordered regions lie at residues 1410-1435 (LLPP…PQDH) and 1528-1550 (PPNK…VTSL). A Phosphoserine modification is found at serine 1535. The PDZ-binding signature appears at 1545–1550 (HLVTSL).

Belongs to the G-protein coupled receptor 2 family. LN-TM7 subfamily. As to quaternary structure, heterodimer of 2 chains generated by proteolytic processing; the large extracellular N-terminal fragment and the membrane-bound C-terminal fragment predominantly remain associated and non-covalently linked. Interacts (via olfactomedin-like domain) with FLRT1 (via extracellular domain). Interacts (via olfactomedin-like domain) with FLRT2 (via extracellular domain). Interacts (via olfactomedin-like domain) with FLRT3 (via extracellular domain); the interaction is direct. Interacts (via extracellular domain) with TENM1. Interacts (via extracellular domain) with TENM2. Interacts (via extracellular domain) with TENM3. Identified in a complex with FLRT3 and UNC5B; does not interact with UNC5B by itself. Identified in a complex with FLRT3 and UNC5D; does not interact with UNC5D by itself. Interacts (via PDZ-binding motif) with SHANK3. Interacts (via PDZ-binding motif) with DLG4. In terms of processing, autoproteolytically processed at the GPS region of the GAIN-B domain; this cleavage modulates receptor activity. Predominantly expressed in brain, followed by heart, placenta, pancreas, kidney and testis.

It localises to the cell membrane. Its subcellular location is the postsynaptic cell membrane. The protein resides in the cell projection. It is found in the axon. The protein localises to the cell junction. Its activity is regulated as follows. Forms a heterodimer of 2 chains generated by proteolytic processing that remain associated through non-covalent interactions mediated by the GAIN-B domain. In the inactivated receptor, the Stachel sequence (also named stalk) is embedded in the GAIN-B domain, where it adopts a beta-strand conformation. On activation, the Stachel moves into the 7 transmembrane region and adopts a twisted hook-shaped configuration that forms contacts within the receptor, leading to coupling of a G-alpha protein, which activates signaling. The cleaved GAIN-B and N-terminal domains can then dissociate from the rest of the receptor. Functionally, orphan adhesion G-protein coupled receptor (aGPCR), which mediates synapse specificity. Ligand binding causes a conformation change that triggers signaling via guanine nucleotide-binding proteins (G proteins) and modulates the activity of downstream effectors. ADGRL3 is coupled with different classes of G alpha proteins, such as G(12)/G(13), G(s), G(i) or G(q), depending on the context. Coupling to G(12)/G(13) G proteins, which mediates the activation Rho small GTPases is the most efficient. Following G-protein coupled receptor activation, associates with cell adhesion molecules that are expressed at the surface of adjacent cells to direct synapse specificity. Specifically mediates the establishment of Schaffer-collateral synapses formed by CA3-region axons on CA1-region pyramidal neurons in the hippocampus. Localizes to postsynaptic spines in excitatory synapses in the S.oriens and S.radiatum and interacts with presynaptic cell adhesion molecules FLRT3 and TENM2, promoting synapse formation. Plays a role in the development of glutamatergic synapses in the cortex. Important in determining the connectivity rates between the principal neurons in the cortex. Orphan adhesion G-protein coupled receptor (aGPCR), which mediates synapse specificity. Ligand binding causes a conformation change that triggers signaling via guanine nucleotide-binding proteins (G proteins) and modulates the activity of downstream effectors, such as adenylate cyclase. Isoform 1 is specifically coupled to G(s) G proteins and mediates activation of adenylate cyclase activity. Following G-protein coupled receptor activation, undergoes liquid-liquid phase transition, associates with (1) cell adhesion molecules that are expressed at the surface of adjacent cells, as well as (2) PDZ-containing proteins, such as SHANK3 and DLG4, in the cytoplasm to direct synapse formation. This Rattus norvegicus (Rat) protein is Adhesion G protein-coupled receptor L3.